The sequence spans 229 residues: Elongation factor 1-delta 1 (229 aa).

Residues 80–109 (ESTAVPSASTPDVADAKAPAADDDDDDDVD) form a disordered region. The span at 100 to 109 (ADDDDDDDVD) shows a compositional bias: acidic residues.

This sequence belongs to the EF-1-beta/EF-1-delta family. As to quaternary structure, EF-1 is composed of 4 subunits: alpha, beta (1B-alpha=beta'), delta (1B-beta), and gamma (1B-gamma).

EF-1-beta and EF-1-beta' stimulate the exchange of GDP bound to EF-1-alpha to GTP. The polypeptide is Elongation factor 1-delta 1 (Oryza sativa subsp. japonica (Rice)).